The primary structure comprises 100 residues: uncharacterized protein (100 aa).

The interval 42–84 (PGEPWRTAGGIGEGGAGGDGAAAGGEGDVHGRPAGAEDGEDGA) is disordered. The span at 50-67 (GGIGEGGAGGDGAAAGGE) shows a compositional bias: gly residues.

This is an uncharacterized protein from Torque teno tamarin virus (isolate So-TTV2).